Reading from the N-terminus, the 139-residue chain is S-adenosyl-L-methionine-binding protein AF_0241 (139 aa).

The TsaA-like domain maps to 3-133 (LKPIGVVKSP…YSPEIDCVNQ (131 aa)). S-adenosyl-L-methionine contacts are provided by residues Q16, 20–22 (PRQ), 58–59 (DK), R82, L92, and 113–116 (LDGS).

This sequence belongs to the tRNA methyltransferase O family. Homodimer.

This is S-adenosyl-L-methionine-binding protein AF_0241 from Archaeoglobus fulgidus (strain ATCC 49558 / DSM 4304 / JCM 9628 / NBRC 100126 / VC-16).